The primary structure comprises 173 residues: Alpha-crystallin A chain (173 aa).

The residue at position 1 (methionine 1) is an N-acetylmethionine. Residues 52–162 (LFRGFMDSGI…SHSERPIPVS (111 aa)) form the sHSP domain. Zn(2+)-binding residues include histidine 100, glutamate 102, histidine 107, and histidine 154. A disordered region spans residues 146–173 (MMSGLDSSHSERPIPVSREEKPTSAPSS). A compositionally biased stretch (basic and acidic residues) spans 153 to 167 (SHSERPIPVSREEKP).

It belongs to the small heat shock protein (HSP20) family. Heteropolymer composed of three CRYAA and one CRYAB subunits. Inter-subunit bridging via zinc ions enhances stability, which is crucial as there is no protein turn over in the lens. Can also form homodimers and homotetramers (dimers of dimers) which serve as the building blocks of homooligomers. Within homooligomers, the zinc-binding motif is created from residues of 3 different molecules. His-100 and Glu-102 from one molecule are ligands of the zinc ion, and His-107 and His-154 residues from additional molecules complete the site with tetrahedral coordination geometry.

It is found in the cytoplasm. Its subcellular location is the nucleus. In terms of biological role, contributes to the transparency and refractive index of the lens. May act as a chaperone, preventing aggregation of various proteins under a wide range of stress conditions. The polypeptide is Alpha-crystallin A chain (CRYAA) (Aquarana catesbeiana (American bullfrog)).